We begin with the raw amino-acid sequence, 123 residues long: Small ribosomal subunit protein uS12c (123 aa).

It belongs to the universal ribosomal protein uS12 family. As to quaternary structure, part of the 30S ribosomal subunit.

The protein resides in the plastid. Its subcellular location is the chloroplast. In terms of biological role, with S4 and S5 plays an important role in translational accuracy. Located at the interface of the 30S and 50S subunits. In Chara vulgaris (Common stonewort), this protein is Small ribosomal subunit protein uS12c (rps12).